Consider the following 45-residue polypeptide: uncharacterized protein (45 aa).

Residues 15–37 (EVVGTLMAVLITFALVAVVFNFI) form a helical membrane-spanning segment.

It is found in the membrane. This is an uncharacterized protein from Archaeoglobus fulgidus (strain ATCC 49558 / DSM 4304 / JCM 9628 / NBRC 100126 / VC-16).